The primary structure comprises 673 residues: UvrABC system protein B (673 aa).

A Helicase ATP-binding domain is found at 26–414; sequence EGLEDGLAHQ…GDEVVDQVVR (389 aa). An ATP-binding site is contributed by 39–46; the sequence is GVTGSGKT. The Beta-hairpin motif lies at 92–115; that stretch reads YYDYYQPEAYVPSSDTFIEKDASV. The region spanning 431–597 is the Helicase C-terminal domain; sequence QVDDLLSEIR…GLNKKVVDIL (167 aa). One can recognise a UVR domain in the interval 633–668; sequence QQKIHELEEQMMQHAQNLEFEEAAQIRDQLHQLREL.

It belongs to the UvrB family. In terms of assembly, forms a heterotetramer with UvrA during the search for lesions. Interacts with UvrC in an incision complex.

The protein localises to the cytoplasm. In terms of biological role, the UvrABC repair system catalyzes the recognition and processing of DNA lesions. A damage recognition complex composed of 2 UvrA and 2 UvrB subunits scans DNA for abnormalities. Upon binding of the UvrA(2)B(2) complex to a putative damaged site, the DNA wraps around one UvrB monomer. DNA wrap is dependent on ATP binding by UvrB and probably causes local melting of the DNA helix, facilitating insertion of UvrB beta-hairpin between the DNA strands. Then UvrB probes one DNA strand for the presence of a lesion. If a lesion is found the UvrA subunits dissociate and the UvrB-DNA preincision complex is formed. This complex is subsequently bound by UvrC and the second UvrB is released. If no lesion is found, the DNA wraps around the other UvrB subunit that will check the other stand for damage. This Salmonella typhi protein is UvrABC system protein B.